Here is a 208-residue protein sequence, read N- to C-terminus: LexA repressor (208 aa).

The segment at residues 28-48 (RAEIARELGFRSANAAEEHLK) is a DNA-binding region (H-T-H motif). Residues serine 125 and lysine 162 each act as for autocatalytic cleavage activity in the active site.

Belongs to the peptidase S24 family. Homodimer.

It carries out the reaction Hydrolysis of Ala-|-Gly bond in repressor LexA.. Represses a number of genes involved in the response to DNA damage (SOS response), including recA and lexA. In the presence of single-stranded DNA, RecA interacts with LexA causing an autocatalytic cleavage which disrupts the DNA-binding part of LexA, leading to derepression of the SOS regulon and eventually DNA repair. The chain is LexA repressor from Aliivibrio fischeri (strain MJ11) (Vibrio fischeri).